Reading from the N-terminus, the 108-residue chain is Mitochondrial pyruvate carrier 4 (108 aa).

Transmembrane regions (helical) follow at residues 19 to 35, 51 to 67, and 74 to 90; these read IHFW…IANI, IAVT…SMVI, and LFSV…YQLA.

It belongs to the mitochondrial pyruvate carrier (MPC) (TC 2.A.105) family.

It localises to the mitochondrion inner membrane. Its function is as follows. Mediates the uptake of pyruvate into mitochondria. This chain is Mitochondrial pyruvate carrier 4, found in Arabidopsis thaliana (Mouse-ear cress).